Reading from the N-terminus, the 261-residue chain is Ribosomal RNA small subunit methyltransferase J (261 aa).

Residues 111 to 112 (RD), 127 to 128 (ER), 163 to 164 (SS), and D181 contribute to the S-adenosyl-L-methionine site.

The protein belongs to the methyltransferase superfamily. RsmJ family.

It localises to the cytoplasm. The enzyme catalyses guanosine(1516) in 16S rRNA + S-adenosyl-L-methionine = N(2)-methylguanosine(1516) in 16S rRNA + S-adenosyl-L-homocysteine + H(+). Specifically methylates the guanosine in position 1516 of 16S rRNA. The chain is Ribosomal RNA small subunit methyltransferase J from Shewanella sp. (strain MR-4).